Consider the following 269-residue polypeptide: Monofunctional glycosyltransferase (269 aa).

A helical transmembrane segment spans residues 46–66 (AIITILILLIIFFGVMYFISS).

It belongs to the glycosyltransferase 51 family.

Its subcellular location is the cell membrane. The catalysed reaction is [GlcNAc-(1-&gt;4)-Mur2Ac(oyl-L-Ala-gamma-D-Glu-L-Lys-D-Ala-D-Ala)](n)-di-trans,octa-cis-undecaprenyl diphosphate + beta-D-GlcNAc-(1-&gt;4)-Mur2Ac(oyl-L-Ala-gamma-D-Glu-L-Lys-D-Ala-D-Ala)-di-trans,octa-cis-undecaprenyl diphosphate = [GlcNAc-(1-&gt;4)-Mur2Ac(oyl-L-Ala-gamma-D-Glu-L-Lys-D-Ala-D-Ala)](n+1)-di-trans,octa-cis-undecaprenyl diphosphate + di-trans,octa-cis-undecaprenyl diphosphate + H(+). It participates in cell wall biogenesis; peptidoglycan biosynthesis. Functionally, peptidoglycan polymerase that catalyzes glycan chain elongation using lipid-linked disaccharide-pentapeptide as the substrate. The chain is Monofunctional glycosyltransferase from Staphylococcus epidermidis (strain ATCC 35984 / DSM 28319 / BCRC 17069 / CCUG 31568 / BM 3577 / RP62A).